The primary structure comprises 219 residues: Large ribosomal subunit protein uL3 (219 aa).

The protein belongs to the universal ribosomal protein uL3 family. In terms of assembly, part of the 50S ribosomal subunit. Forms a cluster with proteins L14 and L19.

Functionally, one of the primary rRNA binding proteins, it binds directly near the 3'-end of the 23S rRNA, where it nucleates assembly of the 50S subunit. This chain is Large ribosomal subunit protein uL3, found in Salinispora arenicola (strain CNS-205).